A 266-amino-acid polypeptide reads, in one-letter code: UPF0294 protein YafD (266 aa).

The protein belongs to the UPF0294 family.

The protein localises to the cytoplasm. This Salmonella typhi protein is UPF0294 protein YafD.